A 244-amino-acid chain; its full sequence is MASLPRRLIWSFSYILRESFPIVSRRNCVSLLRASWRKVLSVGVGTSVCAIPVGQRSEPTLSSESLIKRAVSLVADSSSTFLSQTTYALVESLTEYTTAVYTLISLQQKYTSLLDKMNSNEESAIWQVIIGARVQMKQLKEQYLKYESSWQRAVSLSEMAAEAAYQSGADQASVTVRNHIQIVQTQVQQARNQAHIAEVQLAASQTDEIKRTITEDKGNPPSGGSPRSSLSEEEEIPEAYLRED.

The transit peptide at Met1 to Lys38 directs the protein to the mitochondrion. The IAP-binding signature appears at Ala50–Gly54. Residues Asp207–Gly218 show a composition bias toward basic and acidic residues. The interval Asp207–Asp244 is disordered. Residues Pro220 to Ser229 are compositionally biased toward low complexity.

The protein belongs to the Smac/DIABLO protein family. In terms of assembly, homodimer.

The protein resides in the mitochondrion. Promotes apoptosis. Acts by opposing the inhibitory activity of inhibitor of apoptosis proteins (IAP). The polypeptide is Diablo homolog, mitochondrial (Xenopus tropicalis (Western clawed frog)).